The chain runs to 69 residues: MAESILKSAKINRNVGQVLKSYLRVLKLSKKPSREEFLMISKVAGAGILVIGFVGFLIYVLLTEVPKWV.

A helical membrane pass occupies residues valine 43–threonine 63.

Belongs to the SecE/SEC61-gamma family. Component of the Sec protein translocase complex. Heterotrimer consisting of SecY (alpha), SecG (beta) and SecE (gamma) subunits. The heterotrimers can form oligomers, although 1 heterotrimer is thought to be able to translocate proteins. Interacts with the ribosome. May interact with SecDF, and other proteins may be involved.

The protein resides in the cell membrane. Functionally, essential subunit of the Sec protein translocation channel SecYEG. Clamps together the 2 halves of SecY. May contact the channel plug during translocation. The sequence is that of Protein translocase subunit SecE from Methanococcoides burtonii (strain DSM 6242 / NBRC 107633 / OCM 468 / ACE-M).